Here is a 130-residue protein sequence, read N- to C-terminus: Large ribosomal subunit protein bL19 (130 aa).

Belongs to the bacterial ribosomal protein bL19 family.

Functionally, this protein is located at the 30S-50S ribosomal subunit interface and may play a role in the structure and function of the aminoacyl-tRNA binding site. This chain is Large ribosomal subunit protein bL19, found in Mycoplasma mycoides subsp. mycoides SC (strain CCUG 32753 / NCTC 10114 / PG1).